The primary structure comprises 193 residues: Phosphatidylglycerophosphatase and protein-tyrosine phosphatase 1 (193 aa).

The N-terminal 31 residues, 1 to 31 (MAASAWLEAGLARVLFYPTLLYTVFRGRVRG), are a transit peptide targeting the mitochondrion. Residues 37–188 (WYHRIDHTVL…LKEFHKEITA (152 aa)) enclose the Tyrosine-protein phosphatase domain. Position 85 is an N6-succinyllysine (Lys85). Cys132 functions as the Phosphocysteine intermediate in the catalytic mechanism.

The protein belongs to the protein-tyrosine phosphatase family. Non-receptor class dual specificity subfamily. Interacts with STYXL1; the interaction inhibits PTPMT1 catalytic activity. As to expression, predominantly expressed in testis. Expressed at lower level in heart, brain, spleen, lung, liver, skeletal muscle, kidney, bone marrow, eye, lymph node, smooth muscle, prostate, thymus, stomach and uterus.

The protein localises to the mitochondrion inner membrane. The enzyme catalyses a 1,2-diacyl-sn-glycero-3-phospho-(1'-sn-glycero-3'-phosphate) + H2O = a 1,2-diacyl-sn-glycero-3-phospho-(1'-sn-glycerol) + phosphate. The catalysed reaction is O-phospho-L-tyrosyl-[protein] + H2O = L-tyrosyl-[protein] + phosphate. It carries out the reaction O-phospho-L-seryl-[protein] + H2O = L-seryl-[protein] + phosphate. It catalyses the reaction O-phospho-L-threonyl-[protein] + H2O = L-threonyl-[protein] + phosphate. The enzyme catalyses 1,2-di-(9Z-octadecenoyl)-sn-glycero-3-phospho-(1'-sn-glycerol-3'-phosphate) + H2O = 1,2-di-(9Z-octadecenoyl)-sn-glycero-3-phospho-(1'-sn-glycerol) + phosphate. The catalysed reaction is 1,2-dioctanoyl-sn-glycero-3-phospho-(1D-myo-inositol-5-phosphate) + H2O = 1,2-dioctanoyl-sn-glycero-3-phospho-(1D-myo-inositol) + phosphate. It carries out the reaction a 1-acyl-2-hexanoyl-sn-glycero-3-phospho-(1D-myo-inositol-5-phosphate) + H2O = a 1-acyl-2-hexanoyl-sn-glycero-3-phospho-(1D-myo-inositol) + phosphate. It catalyses the reaction 1,2-dibutyryl-sn-glycero-3-phospho-(1D-myo-inositol-5-phosphate) + H2O = 1,2-dibutyryl-sn-glycero-3-phospho-(1D-myo-inositol) + phosphate. Its pathway is phospholipid metabolism; phosphatidylglycerol biosynthesis; phosphatidylglycerol from CDP-diacylglycerol: step 2/2. Its function is as follows. Lipid phosphatase which dephosphorylates phosphatidylglycerophosphate (PGP) to phosphatidylglycerol (PG). PGP is an essential intermediate in the biosynthetic pathway of cardiolipin, a mitochondrial-specific phospholipid regulating the membrane integrity and activities of the organelle. Has also been shown to display phosphatase activity toward phosphoprotein substrates, specifically mediates dephosphorylation of mitochondrial proteins, thereby playing an essential role in ATP production. Has probably a preference for proteins phosphorylated on Ser and/or Thr residues compared to proteins phosphorylated on Tyr residues. Probably involved in regulation of insulin secretion in pancreatic beta cells. May prevent intrinsic apoptosis, probably by regulating mitochondrial membrane integrity. This chain is Phosphatidylglycerophosphatase and protein-tyrosine phosphatase 1, found in Mus musculus (Mouse).